Here is a 150-residue protein sequence, read N- to C-terminus: D-aminoacyl-tRNA deacylase (150 aa).

Residues 138–139 (GP) carry the Gly-cisPro motif, important for rejection of L-amino acids motif.

The protein belongs to the DTD family. In terms of assembly, homodimer.

It localises to the cytoplasm. The catalysed reaction is glycyl-tRNA(Ala) + H2O = tRNA(Ala) + glycine + H(+). It catalyses the reaction a D-aminoacyl-tRNA + H2O = a tRNA + a D-alpha-amino acid + H(+). In terms of biological role, an aminoacyl-tRNA editing enzyme that deacylates mischarged D-aminoacyl-tRNAs. Also deacylates mischarged glycyl-tRNA(Ala), protecting cells against glycine mischarging by AlaRS. Acts via tRNA-based rather than protein-based catalysis; rejects L-amino acids rather than detecting D-amino acids in the active site. By recycling D-aminoacyl-tRNA to D-amino acids and free tRNA molecules, this enzyme counteracts the toxicity associated with the formation of D-aminoacyl-tRNA entities in vivo and helps enforce protein L-homochirality. The chain is D-aminoacyl-tRNA deacylase from Porphyromonas gingivalis (strain ATCC 33277 / DSM 20709 / CIP 103683 / JCM 12257 / NCTC 11834 / 2561).